The primary structure comprises 450 residues: L-lysine-epsilon aminotransferase (450 aa).

Residues Gly-127 and Ala-128 each contribute to the pyridoxal 5'-phosphate site. 2-oxoglutarate is bound by residues Arg-168 and Gln-274. Residue Arg-168 participates in L-lysine binding. Gln-274 serves as a coordination point for pyridoxal 5'-phosphate. N6-(pyridoxal phosphate)lysine is present on Lys-300. Arg-423 is a binding site for 2-oxoglutarate.

It belongs to the class-III pyridoxal-phosphate-dependent aminotransferase family. It depends on pyridoxal 5'-phosphate as a cofactor.

The enzyme catalyses L-lysine + 2-oxoglutarate = (S)-2-amino-6-oxohexanoate + L-glutamate. The protein operates within antibiotic biosynthesis; cephamycin C biosynthesis. Functionally, catalyzes the transfer of the terminal amino group of L-lysine to alpha-ketoglutarate to yield L-glutamate and 2-aminoadipate 6-semialdehyde ((S)-2-amino-6-oxohexanoate), which is spontaneously converted to the dehydrated form 1-piperideine 6-carboxylate. This chain is L-lysine-epsilon aminotransferase, found in Amycolatopsis lactamdurans (Nocardia lactamdurans).